Reading from the N-terminus, the 300-residue chain is uncharacterized protein (300 aa).

An N-terminal signal peptide occupies residues 1–19 (MKLKLLLIPLLGSSLLLSA). Cys20 carries N-palmitoyl cysteine lipidation. Cys20 carries S-diacylglycerol cysteine lipidation.

Belongs to the MG439/MG440 family.

It is found in the cell membrane. This is an uncharacterized protein from Mycoplasma pneumoniae (strain ATCC 29342 / M129 / Subtype 1) (Mycoplasmoides pneumoniae).